We begin with the raw amino-acid sequence, 371 residues long: MPHQQILILFGLLPVATNISTWWNFGSMLLACSSMQVLTGFFLAVHYTANINLAFSSIMHITRDVPYGWMMQNLHAIGASMFFICIYTHIARGLYYGSYLNKKTWLSGTTLLIMLMATAFFGYVLPWGQMSFWAATVITNLLTAIPYLGTTMTTWLWGGFAINDPTLTRFFALHFILPFGIISLSSLHIMLLHEDGSSNPLGTNSDIDKIPFHPYHTYKDMLMLSLMILALLMTVAFFPDIFNDPENFSKANPLVTPQHIKPEWYFLFAYGILRSIPNKLGGALALVMSIMILLTAPFTHTSAIRSMTFRPIMQLMFWTLVATFAVITWAATKPVEPPFTTISQVASTMYFMFFITNPIMGWFENKIMKYN.

4 helical membrane-spanning segments follow: residues 25-45 (FGSMLLACSSMQVLTGFFLAV), 69-90 (WMMQNLHAIGASMFFICIYTHI), 105-125 (WLSGTTLLIMLMATAFFGYVL), and 170-190 (FFALHFILPFGIISLSSLHIM). Positions 75 and 89 each coordinate heme b. His174 and His188 together coordinate heme b. His193 is an a ubiquinone binding site. The next 4 membrane-spanning stretches (helical) occupy residues 218 to 238 (YKDMLMLSLMILALLMTVAFF), 280 to 300 (LGGALALVMSIMILLTAPFTH), 312 to 332 (IMQLMFWTLVATFAVITWAAT), and 339 to 358 (FTTISQVASTMYFMFFITNP).

This sequence belongs to the cytochrome b family. In terms of assembly, the cytochrome bc1 complex contains 3 respiratory subunits (MT-CYB, CYC1 and UQCRFS1), 2 core proteins (UQCRC1 and UQCRC2) and probably 6 low-molecular weight proteins. The cofactor is heme b.

The protein resides in the mitochondrion inner membrane. In terms of biological role, component of the ubiquinol-cytochrome c reductase complex (complex III or cytochrome b-c1 complex) that is part of the mitochondrial respiratory chain. The b-c1 complex mediates electron transfer from ubiquinol to cytochrome c. Contributes to the generation of a proton gradient across the mitochondrial membrane that is then used for ATP synthesis. This Eryx colubrinus colubrinus protein is Cytochrome b (MT-CYB).